Reading from the N-terminus, the 484-residue chain is Sodium/pantothenate symporter (484 aa).

13 helical membrane-spanning segments follow: residues 3 to 23 (LGIILPLIIYLTFVFGAAIFA), 45 to 65 (GFVLAMTTASTYASASSFVGG), 74 to 94 (LGWVLLAMIQVPVVWLALGAL), 124 to 144 (VWLSSLALLLAFFAAMTVQFI), 162 to 182 (LLLFALTVGIYTFIGGFRAVV), 190 to 210 (TVMIFGTIILLIGTIYALGGV), 238 to 258 (FMASFWILVCFGVVGLPHTAV), 273 to 293 (MLIGTIVLSIIMLGMHLAGAL), 307 to 327 (VIPTLMIKVLPPIVAGIFLAA), 366 to 386 (VSYFSSIITLILTALLIFAAL), 397 to 417 (LFAFGGLEAAFLWVIVLGIYW), 424 to 444 (GALSSMIIGLGSYILLTQLGI), and 446 to 466 (LFNFHQIVPSLVFGLIAFLVG).

The protein belongs to the sodium:solute symporter (SSF) (TC 2.A.21) family.

Its subcellular location is the cell inner membrane. It carries out the reaction (R)-pantothenate(in) + Na(+)(in) = (R)-pantothenate(out) + Na(+)(out). In terms of biological role, catalyzes the sodium-dependent uptake of extracellular pantothenate. In Haemophilus influenzae (strain ATCC 51907 / DSM 11121 / KW20 / Rd), this protein is Sodium/pantothenate symporter (panF).